The following is a 158-amino-acid chain: Transcription elongation factor GreA (158 aa).

It belongs to the GreA/GreB family.

In terms of biological role, necessary for efficient RNA polymerase transcription elongation past template-encoded arresting sites. The arresting sites in DNA have the property of trapping a certain fraction of elongating RNA polymerases that pass through, resulting in locked ternary complexes. Cleavage of the nascent transcript by cleavage factors such as GreA or GreB allows the resumption of elongation from the new 3'terminus. GreA releases sequences of 2 to 3 nucleotides. The protein is Transcription elongation factor GreA of Methylobacterium nodulans (strain LMG 21967 / CNCM I-2342 / ORS 2060).